We begin with the raw amino-acid sequence, 460 residues long: Ribosomal protein uS12 methylthiotransferase RimO (460 aa).

An MTTase N-terminal domain is found at Asn16–Tyr130. The [4Fe-4S] cluster site is built by Cys25, Cys61, Cys93, Cys164, Cys168, and Cys171. The Radical SAM core domain maps to Ser150–Lys382. One can recognise a TRAM domain in the interval Gln385 to Lys455.

This sequence belongs to the methylthiotransferase family. RimO subfamily. It depends on [4Fe-4S] cluster as a cofactor.

The protein resides in the cytoplasm. The catalysed reaction is L-aspartate(89)-[ribosomal protein uS12]-hydrogen + (sulfur carrier)-SH + AH2 + 2 S-adenosyl-L-methionine = 3-methylsulfanyl-L-aspartate(89)-[ribosomal protein uS12]-hydrogen + (sulfur carrier)-H + 5'-deoxyadenosine + L-methionine + A + S-adenosyl-L-homocysteine + 2 H(+). Its function is as follows. Catalyzes the methylthiolation of an aspartic acid residue of ribosomal protein uS12. This is Ribosomal protein uS12 methylthiotransferase RimO from Chlamydia felis (strain Fe/C-56) (Chlamydophila felis).